The primary structure comprises 82 residues: uncharacterized protein (82 aa).

This is an uncharacterized protein from Ictaluridae (bullhead catfishes).